The chain runs to 616 residues: Mitochondrial Rho GTPase 2 (616 aa).

Over 1–590 (MKRDVRILLL…HDTELSTASF (590 aa)) the chain is Cytoplasmic. Residues 2–168 (KRDVRILLLG…FYYAQKAVLH (167 aa)) enclose the Miro 1 domain. Positions 16, 17, 18, and 19 each coordinate GTP. Thr-18 lines the Mg(2+) pocket. Residue Asp-57 coordinates Mg(2+). Positions 59, 118, 119, 121, 149, and 150 each coordinate GTP. EF-hand domains lie at 184–219 (QCKK…CFGN) and 304–339 (FGYQ…FPYT). Ca(2+)-binding residues include Asp-199, Asn-201, Glu-208, Asp-317, Asp-319, Asp-321, and Glu-328. One can recognise a Miro 2 domain in the interval 416-577 (RNVFLCRVIG…YSKLATAAAF (162 aa)). GTP-binding residues include Gly-428, Gly-430, Lys-431, Ser-432, and Ala-433. A Mg(2+)-binding site is contributed by Ser-432. Glu-474 provides a ligand contact to Mg(2+). 3 residues coordinate GTP: Lys-528, Asp-530, and Cys-559. A helical; Anchor for type IV membrane protein transmembrane segment spans residues 591 to 613 (WLRVALGATVAAVVGFTLYKALL). The Mitochondrial intermembrane portion of the chain corresponds to 614–616 (RSK).

Belongs to the mitochondrial Rho GTPase family. As to quaternary structure, homodimer.

Its subcellular location is the mitochondrion outer membrane. It carries out the reaction GTP + H2O = GDP + phosphate + H(+). It catalyses the reaction ATP + H2O = ADP + phosphate + H(+). The enzyme catalyses UTP + H2O = UDP + phosphate + H(+). In terms of biological role, atypical mitochondrial nucleoside-triphosphatase (NTPase) involved in mitochondrial trafficking. Probably involved in control of anterograde transport of mitochondria and their subcellular distribution. Can hydrolyze GTP, ATP and UTP. The protein is Mitochondrial Rho GTPase 2 (rhot2) of Xenopus tropicalis (Western clawed frog).